The sequence spans 258 residues: Phosphonates import ATP-binding protein PhnC 1 (258 aa).

Residues 2–246 enclose the ABC transporter domain; sequence IEFKDVGLVY…TFEEIYGRSI (245 aa). 35 to 42 is a binding site for ATP; that stretch reads GLSGAGKS.

Belongs to the ABC transporter superfamily. Phosphonates importer (TC 3.A.1.9.1) family. In terms of assembly, the complex is composed of two ATP-binding proteins (PhnC), two transmembrane proteins (PhnE) and a solute-binding protein (PhnD).

The protein localises to the cell membrane. It catalyses the reaction phosphonate(out) + ATP + H2O = phosphonate(in) + ADP + phosphate + H(+). Functionally, part of the ABC transporter complex PhnCDE involved in phosphonates import. Responsible for energy coupling to the transport system. The protein is Phosphonates import ATP-binding protein PhnC 1 of Oceanobacillus iheyensis (strain DSM 14371 / CIP 107618 / JCM 11309 / KCTC 3954 / HTE831).